A 268-amino-acid polypeptide reads, in one-letter code: Tryptophan synthase alpha chain (268 aa).

Residues glutamate 49 and aspartate 60 each act as proton acceptor in the active site.

Belongs to the TrpA family. In terms of assembly, tetramer of two alpha and two beta chains.

The catalysed reaction is (1S,2R)-1-C-(indol-3-yl)glycerol 3-phosphate + L-serine = D-glyceraldehyde 3-phosphate + L-tryptophan + H2O. The protein operates within amino-acid biosynthesis; L-tryptophan biosynthesis; L-tryptophan from chorismate: step 5/5. Its function is as follows. The alpha subunit is responsible for the aldol cleavage of indoleglycerol phosphate to indole and glyceraldehyde 3-phosphate. In Haemophilus influenzae (strain PittGG), this protein is Tryptophan synthase alpha chain.